The chain runs to 492 residues: Trigger factor (492 aa).

Positions Gly-169–Leu-254 constitute a PPIase FKBP-type domain. The interval Leu-441–Glu-492 is disordered. Over residues Lys-463–Lys-479 the composition is skewed to basic and acidic residues. Over residues Lys-480–Glu-492 the composition is skewed to basic residues.

Belongs to the FKBP-type PPIase family. Tig subfamily.

Its subcellular location is the cytoplasm. The enzyme catalyses [protein]-peptidylproline (omega=180) = [protein]-peptidylproline (omega=0). Its function is as follows. Involved in protein export. Acts as a chaperone by maintaining the newly synthesized protein in an open conformation. Functions as a peptidyl-prolyl cis-trans isomerase. This is Trigger factor from Mesorhizobium japonicum (strain LMG 29417 / CECT 9101 / MAFF 303099) (Mesorhizobium loti (strain MAFF 303099)).